The chain runs to 557 residues: D-arabinono-1,4-lactone oxidase (557 aa).

The FAD-binding PCMH-type domain occupies 25-209; it reads FLCKPQAIFQ…THVTLRTCPK (185 aa). Residues 58–61, 62–63, 144–148, Ile199, and 543–546 each bind FAD; these read VGSG, HS, ISTGT, and LSGK. His62 bears the Pros-8alpha-FAD histidine mark.

This sequence belongs to the oxygen-dependent FAD-linked oxidoreductase family. FAD serves as cofactor.

It carries out the reaction D-arabinono-1,4-lactone + O2 = dehydro-D-arabinono-1,4-lactone + H2O2 + H(+). It catalyses the reaction L-galactono-1,4-lactone + O2 = L-ascorbate + H2O2 + H(+). The catalysed reaction is L-gulono-1,4-lactone + O2 = L-ascorbate + H2O2 + H(+). The enzyme catalyses L-xylono-1,4-lactone + O2 = dehydro-L-arabinono-1,4-lactone + H2O2 + H(+). It functions in the pathway cofactor biosynthesis; D-erythroascorbate biosynthesis; dehydro-D-arabinono-1,4-lactone from D-arabinose: step 2/2. Its function is as follows. D-arabinono-1,4-lactone oxidase that catalyzes the final step of biosynthesis of D-erythroascorbic acid, an important antioxidant and one of the virulence factors enhancing the pathogenicity. Is also able to oxidize L-galactono-1,4-lactone, L-xylono-1,4-lactone and L-gulono-1,4-lactone. In Candida albicans (strain SC5314 / ATCC MYA-2876) (Yeast), this protein is D-arabinono-1,4-lactone oxidase.